The sequence spans 157 residues: Transcription elongation factor GreA (157 aa).

The protein belongs to the GreA/GreB family.

Functionally, necessary for efficient RNA polymerase transcription elongation past template-encoded arresting sites. The arresting sites in DNA have the property of trapping a certain fraction of elongating RNA polymerases that pass through, resulting in locked ternary complexes. Cleavage of the nascent transcript by cleavage factors such as GreA or GreB allows the resumption of elongation from the new 3'terminus. GreA releases sequences of 2 to 3 nucleotides. In Bartonella henselae (strain ATCC 49882 / DSM 28221 / CCUG 30454 / Houston 1) (Rochalimaea henselae), this protein is Transcription elongation factor GreA.